Reading from the N-terminus, the 188-residue chain is Tetratricopeptide repeat protein 36 (188 aa).

TPR repeat units follow at residues 50–83 (SKALELQAVIAAEAGDLSTALERFGQAINLLPER), 85–117 (SAYNNRAQARRLQGDVAGALEDLERALALSGGR), and 122–155 (RQGFVQRGLVARLQGRDDDARRDFERAARLGSPF).

This sequence belongs to the TTC36 family.

The chain is Tetratricopeptide repeat protein 36 (TTC36) from Bos taurus (Bovine).